The sequence spans 345 residues: NADPH dehydrogenase (345 aa).

23 to 26 is an FMN binding site; it reads SPMC. Substrate is bound at residue Y28. FMN is bound by residues A60 and Q102. Substrate is bound at residue 164 to 167; it reads HGAH. Residues R215 and 307–308 contribute to the FMN site; that span reads GR.

This sequence belongs to the NADH:flavin oxidoreductase/NADH oxidase family. NamA subfamily. In terms of assembly, homotetramer. FMN is required as a cofactor.

It carries out the reaction A + NADPH + H(+) = AH2 + NADP(+). In terms of biological role, catalyzes the reduction of the double bond of an array of alpha,beta-unsaturated aldehydes and ketones. It also reduces the nitro group of nitroester and nitroaromatic compounds. It could have a role in detoxification processes. In Bacillus thuringiensis subsp. konkukian (strain 97-27), this protein is NADPH dehydrogenase.